A 733-amino-acid polypeptide reads, in one-letter code: Tudor domain-containing protein 3 (733 aa).

A disordered region spans residues 241 to 281 (TRTFGGGGNAGGNLANPGSSYKSRDTYQRKREEREKPWTEN). Residues 262-281 (KSRDTYQRKREEREKPWTEN) show a composition bias toward basic and acidic residues. Positions 290–330 (LVDERALRDIMEMGFNREAARQALLDNNNNLEVALNLLLTR) constitute a UBA domain. The disordered stretch occupies residues 333-630 (QPRAAPVEQS…RSGPIKGPRD (298 aa)). The segment covering 346–355 (PRGKGRGKGR) has biased composition (basic residues). Polar residues predominate over residues 392–408 (PSQQDHQTKMNFSNSDQ). The segment covering 420-441 (PRNDGRSQRNDRPPRFQKDGDF) has biased composition (basic and acidic residues). Residues 446 to 455 (PASSSFSQPQ) are compositionally biased toward polar residues. The span at 456–478 (KWRDGERTGRGGGPERWKNESQD) shows a compositional bias: basic and acidic residues. Polar residues predominate over residues 484-499 (VSYSSSFSKSREQQGA). Residues 559 to 570 (HSQDALGKKDFQ) show a composition bias toward basic and acidic residues. Positions 639–699 (NWKAGDQCLA…KPLHMDDDED (61 aa)) constitute a Tudor domain. Positions 706–716 (LEFRRGGDGQP) are enriched in basic and acidic residues. Residues 706–733 (LEFRRGGDGQPRRSRPTQQYYQPPRARD) form a disordered region.

In terms of assembly, component of mRNA stress granules.

The protein localises to the cytoplasm. The protein resides in the nucleus. Scaffolding protein that specifically recognizes and binds dimethylarginine-containing proteins. Plays a role in the regulation of translation of target mRNAs by binding Arg/Gly-rich motifs (GAR) in dimethylarginine-containing proteins. In nucleus, acts as a coactivator: recognizes and binds asymmetric dimethylation on the core histone tails associated with transcriptional activation (H3R17me2a and H4R3me2a) and recruits proteins at these arginine-methylated loci. In cytoplasm, acts as an antiviral factor that participates in the assembly of stress granules together with G3BP1. In Danio rerio (Zebrafish), this protein is Tudor domain-containing protein 3 (tdrd3).